The following is a 252-amino-acid chain: uncharacterized protein (252 aa).

It localises to the plastid. Its subcellular location is the chloroplast. This is an uncharacterized protein from Guillardia theta (Cryptophyte).